Consider the following 919-residue polypeptide: Transcriptional regulatory protein EDS1 (919 aa).

The segment at 1–54 (MSHHVPNLYGTPIRDPHERKRNSASMGEVNQSVSSRNCERGSEKGTKQRKKASH) is disordered. Over residues 23-36 (SASMGEVNQSVSSR) the composition is skewed to polar residues. Over residues 37–46 (NCERGSEKGT) the composition is skewed to basic and acidic residues. A DNA-binding region (zn(2)-C6 fungal-type) is located at residues 56–85 (CDQCRRKRIKCRFDKHTGVCQGCLEVGEKC). The interval 297 to 338 (AGFPNKKLGTDGRSDKWDKNSTWKPVYRSSNPSHPSTEKNVS) is disordered. The segment covering 304–317 (LGTDGRSDKWDKNS) has biased composition (basic and acidic residues). Residues 318–338 (TWKPVYRSSNPSHPSTEKNVS) show a composition bias toward polar residues.

This sequence belongs to the EDS1/RGT1 family. As to quaternary structure, binds DNA in a sequence-specific manner.

The protein localises to the nucleus. This Saccharomyces cerevisiae (strain ATCC 204508 / S288c) (Baker's yeast) protein is Transcriptional regulatory protein EDS1 (EDS1).